The chain runs to 266 residues: PDZ domain-containing protein 9 (266 aa).

Positions 27-109 (KVIQTKLTVG…GTVLQIKAYR (83 aa)) constitute a PDZ domain.

The polypeptide is PDZ domain-containing protein 9 (Pdzd9) (Mus musculus (Mouse)).